A 206-amino-acid polypeptide reads, in one-letter code: Cytochrome b6-f complex iron-sulfur subunit, chloroplastic (206 aa).

The transit peptide at 1–29 (MAMLSSRRVAAPAKASAIRRSRVMPVVRA) directs the protein to the chloroplast. A helical membrane pass occupies residues 39–68 (MNKRNIMNLILAGGAGLPITTLALGYGAFF). The region spanning 92-188 (AGEWLKTHLA…CDVAESGLVT (97 aa)) is the Rieske domain. The [2Fe-2S] cluster site is built by Cys134, His136, Cys152, and His155. Cysteines 139 and 154 form a disulfide.

Belongs to the Rieske iron-sulfur protein family. As to quaternary structure, the 4 large subunits of the cytochrome b6-f complex are cytochrome b6, subunit IV (17 kDa polypeptide, petD), cytochrome f and the Rieske protein, while the 4 small subunits are petG, petL, petM and petN. The complex functions as a dimer. [2Fe-2S] cluster is required as a cofactor.

It is found in the plastid. It localises to the chloroplast thylakoid membrane. It carries out the reaction 2 oxidized [plastocyanin] + a plastoquinol + 2 H(+)(in) = 2 reduced [plastocyanin] + a plastoquinone + 4 H(+)(out). Component of the cytochrome b6-f complex, which mediates electron transfer between photosystem II (PSII) and photosystem I (PSI), cyclic electron flow around PSI, and state transitions. This chain is Cytochrome b6-f complex iron-sulfur subunit, chloroplastic (petC), found in Chlamydomonas reinhardtii (Chlamydomonas smithii).